Consider the following 546-residue polypeptide: Chaperonin GroEL (546 aa).

Residues 29-32, Lys50, 86-90, Gly414, and Asp492 each bind ATP; these read TMGP and DGTTT.

It belongs to the chaperonin (HSP60) family. As to quaternary structure, forms a cylinder of 14 subunits composed of two heptameric rings stacked back-to-back. Interacts with the co-chaperonin GroES.

It localises to the cytoplasm. The enzyme catalyses ATP + H2O + a folded polypeptide = ADP + phosphate + an unfolded polypeptide.. Functionally, together with its co-chaperonin GroES, plays an essential role in assisting protein folding. The GroEL-GroES system forms a nano-cage that allows encapsulation of the non-native substrate proteins and provides a physical environment optimized to promote and accelerate protein folding. This chain is Chaperonin GroEL, found in Helicobacter pylori (strain J99 / ATCC 700824) (Campylobacter pylori J99).